A 234-amino-acid polypeptide reads, in one-letter code: MSLLHQARFFTTVNHLRDLPATAVPEVAFAGRSNAGKSTAINVLCNQKRLAFSSKTPGRTQHINYFSVMPAKALDPLGFLVDLPGYGYAQVPGEAKSHWEHLLGDYIQTRSQLAGLVIMMDARRPFTDLDCQMVEWFLPTGKPIHVLLTKADKLTNNDASRALMSARKVLAGYQAQIEGEVSLTVQLFSSLKRRGIEEAQRTVAGWLCLPEAMPPSPDAEPAKKTPSPDAQRGE.

In terms of domain architecture, EngB-type G spans 23–209; the sequence is AVPEVAFAGR…QRTVAGWLCL (187 aa). GTP-binding positions include 31–38, 58–62, 82–85, 149–152, and 187–190; these read GRSNAGKS, GRTQH, DLPG, TKAD, and LFSS. Positions 38 and 60 each coordinate Mg(2+). The disordered stretch occupies residues 210–234; it reads PEAMPPSPDAEPAKKTPSPDAQRGE.

It belongs to the TRAFAC class TrmE-Era-EngA-EngB-Septin-like GTPase superfamily. EngB GTPase family. Requires Mg(2+) as cofactor.

Functionally, necessary for normal cell division and for the maintenance of normal septation. This chain is Probable GTP-binding protein EngB, found in Ralstonia nicotianae (strain ATCC BAA-1114 / GMI1000) (Ralstonia solanacearum).